The chain runs to 550 residues: Glucose-6-phosphate isomerase (550 aa).

Residue glutamate 356 is the Proton donor of the active site. Residues histidine 387 and lysine 515 contribute to the active site.

It belongs to the GPI family.

The protein localises to the cytoplasm. The enzyme catalyses alpha-D-glucose 6-phosphate = beta-D-fructose 6-phosphate. The protein operates within carbohydrate biosynthesis; gluconeogenesis. Its pathway is carbohydrate degradation; glycolysis; D-glyceraldehyde 3-phosphate and glycerone phosphate from D-glucose: step 2/4. Catalyzes the reversible isomerization of glucose-6-phosphate to fructose-6-phosphate. This chain is Glucose-6-phosphate isomerase, found in Aliivibrio salmonicida (strain LFI1238) (Vibrio salmonicida (strain LFI1238)).